Here is a 362-residue protein sequence, read N- to C-terminus: Phosphoserine aminotransferase (362 aa).

Residues serine 9 and arginine 42 each contribute to the L-glutamate site. Pyridoxal 5'-phosphate contacts are provided by residues 76 to 77, tryptophan 102, threonine 153, aspartate 174, and glutamine 197; that span reads GR. Lysine 198 carries the N6-(pyridoxal phosphate)lysine modification. 239–240 lines the pyridoxal 5'-phosphate pocket; the sequence is NT.

The protein belongs to the class-V pyridoxal-phosphate-dependent aminotransferase family. SerC subfamily. In terms of assembly, homodimer. Pyridoxal 5'-phosphate is required as a cofactor.

Its subcellular location is the cytoplasm. The enzyme catalyses O-phospho-L-serine + 2-oxoglutarate = 3-phosphooxypyruvate + L-glutamate. The catalysed reaction is 4-(phosphooxy)-L-threonine + 2-oxoglutarate = (R)-3-hydroxy-2-oxo-4-phosphooxybutanoate + L-glutamate. It functions in the pathway amino-acid biosynthesis; L-serine biosynthesis; L-serine from 3-phospho-D-glycerate: step 2/3. It participates in cofactor biosynthesis; pyridoxine 5'-phosphate biosynthesis; pyridoxine 5'-phosphate from D-erythrose 4-phosphate: step 3/5. Its function is as follows. Catalyzes the reversible conversion of 3-phosphohydroxypyruvate to phosphoserine and of 3-hydroxy-2-oxo-4-phosphonooxybutanoate to phosphohydroxythreonine. The chain is Phosphoserine aminotransferase from Klebsiella pneumoniae subsp. pneumoniae (strain ATCC 700721 / MGH 78578).